The chain runs to 590 residues: Selenoprotein N (590 aa).

Positions 1 to 26 (MGRARPGQRGPPSPGPAAQPPAPPRR) are disordered. A signal peptide spans 1 to 43 (MGRARPGQRGPPSPGPAAQPPAPPRRRARSLALLGALLAAAAA). Positions 9-23 (RGPPSPGPAAQPPAP) are enriched in pro residues. Residues 67-102 (TLGTDGLFLFSSLDTDGDMYISPEEFKPIAEKLTGS) enclose the EF-hand domain. The N-linked (GlcNAc...) asparagine glycan is linked to asparagine 126. Residue selenocysteine 127 is a non-standard amino acid, selenocysteine. N-linked (GlcNAc...) asparagine glycosylation is present at asparagine 190. Selenocysteine 462 is a non-standard amino acid (selenocysteine). N-linked (GlcNAc...) asparagine glycans are attached at residues asparagine 483, asparagine 505, and asparagine 531.

As to quaternary structure, interacts with RYR1, RYR2 and RYR3. In terms of processing, N-glycosylated. In terms of tissue distribution, isoform 1 and isoform 2 are expressed in skeletal muscle, brain, lung and placenta. Isoform 2 is also expressed in heart, diaphragm and stomach.

The protein localises to the endoplasmic reticulum membrane. Plays an important role in cell protection against oxidative stress and in the regulation of redox-related calcium homeostasis. Regulates the calcium level of the ER by protecting the calcium pump ATP2A2 against the oxidoreductase ERO1A-mediated oxidative damage. Within the ER, ERO1A activity increases the concentration of H(2)O(2), which attacks the luminal thiols in ATP2A2 and thus leads to cysteinyl sulfenic acid formation (-SOH) and SEPN1 reduces the SOH back to free thiol (-SH), thus restoring ATP2A2 activity. Acts as a modulator of ryanodine receptor (RyR) activity: protects RyR from oxidation due to increased oxidative stress, or directly controls the RyR redox state, regulating the RyR-mediated calcium mobilization required for normal muscle development and differentiation. Its function is as follows. Essential for muscle regeneration and satellite cell maintenance in skeletal muscle. The polypeptide is Selenoprotein N (Homo sapiens (Human)).